The chain runs to 103 residues: NADH-ubiquinone oxidoreductase chain 4L (103 aa).

Helical transmembrane passes span 6–26, 31–51, and 65–85; these read IFFL…GIFI, IIII…NFAI, and ILYT…ILII.

This sequence belongs to the complex I subunit 4L family.

It is found in the mitochondrion membrane. It catalyses the reaction a ubiquinone + NADH + 5 H(+)(in) = a ubiquinol + NAD(+) + 4 H(+)(out). Functionally, core subunit of the mitochondrial membrane respiratory chain NADH dehydrogenase (Complex I) that is believed to belong to the minimal assembly required for catalysis. Complex I functions in the transfer of electrons from NADH to the respiratory chain. The immediate electron acceptor for the enzyme is believed to be ubiquinone. This chain is NADH-ubiquinone oxidoreductase chain 4L (ND4L), found in Acanthamoeba castellanii (Amoeba).